Here is a 95-residue protein sequence, read N- to C-terminus: Co-chaperonin GroES (95 aa).

This sequence belongs to the GroES chaperonin family. Heptamer of 7 subunits arranged in a ring. Interacts with the chaperonin GroEL.

The protein localises to the cytoplasm. In terms of biological role, together with the chaperonin GroEL, plays an essential role in assisting protein folding. The GroEL-GroES system forms a nano-cage that allows encapsulation of the non-native substrate proteins and provides a physical environment optimized to promote and accelerate protein folding. GroES binds to the apical surface of the GroEL ring, thereby capping the opening of the GroEL channel. This is Co-chaperonin GroES from Beijerinckia indica subsp. indica (strain ATCC 9039 / DSM 1715 / NCIMB 8712).